Consider the following 37-residue polypeptide: NADH dehydrogenase [ubiquinone] 1 alpha subcomplex subunit 5 (37 aa).

This sequence belongs to the complex I NDUFA5 subunit family. Complex I is composed of about 45 different subunits.

The protein resides in the mitochondrion inner membrane. Its function is as follows. Accessory subunit of the mitochondrial membrane respiratory chain NADH dehydrogenase (Complex I), that is believed not to be involved in catalysis. Complex I functions in the transfer of electrons from NADH to the respiratory chain. The immediate electron acceptor for the enzyme is believed to be ubiquinone. This is NADH dehydrogenase [ubiquinone] 1 alpha subcomplex subunit 5 from Solanum tuberosum (Potato).